Consider the following 112-residue polypeptide: Gonad-inhibiting hormone (112 aa).

Positions 1–31 are cleaved as a signal peptide; sequence MVTRVGSGFSVQRVWLLLVIVVVLCGSVTQQ. Disulfide bonds link C41/C78, C58/C74, and C61/C87. Position 109 is an alanine amide (A109).

As to expression, produced in the eyestalk X-organ sinus gland complex of male and female lobsters.

It localises to the secreted. In terms of biological role, inhibits vitellogenesis in female animals. Plays a prominent role in the regulation of reproduction/molting processes. This is Gonad-inhibiting hormone from Homarus americanus (American lobster).